The sequence spans 214 residues: Large ribosomal subunit protein bL25 (214 aa).

The tract at residues 193-214 (PRAAAEEEDTGAEGDVEAADAE) is disordered. The span at 198–214 (EEEDTGAEGDVEAADAE) shows a compositional bias: acidic residues.

Belongs to the bacterial ribosomal protein bL25 family. CTC subfamily. As to quaternary structure, part of the 50S ribosomal subunit; part of the 5S rRNA/L5/L18/L25 subcomplex. Contacts the 5S rRNA. Binds to the 5S rRNA independently of L5 and L18.

Its function is as follows. This is one of the proteins that binds to the 5S RNA in the ribosome where it forms part of the central protuberance. The chain is Large ribosomal subunit protein bL25 from Nitrosococcus oceani (strain ATCC 19707 / BCRC 17464 / JCM 30415 / NCIMB 11848 / C-107).